We begin with the raw amino-acid sequence, 235 residues long: Putative N-acetylmannosamine-6-phosphate 2-epimerase (235 aa).

This sequence belongs to the NanE family.

The catalysed reaction is an N-acyl-D-glucosamine 6-phosphate = an N-acyl-D-mannosamine 6-phosphate. It participates in amino-sugar metabolism; N-acetylneuraminate degradation; D-fructose 6-phosphate from N-acetylneuraminate: step 3/5. In terms of biological role, converts N-acetylmannosamine-6-phosphate (ManNAc-6-P) to N-acetylglucosamine-6-phosphate (GlcNAc-6-P). The protein is Putative N-acetylmannosamine-6-phosphate 2-epimerase of Photobacterium profundum (strain SS9).